The chain runs to 224 residues: GrpE protein homolog 2, mitochondrial (224 aa).

A mitochondrion-targeting transit peptide spans 1-31 (MAARLLWAVRRRMQPLAAHAASEGRGWLHPF). Lys-141 bears the N6-acetyllysine mark.

The protein belongs to the GrpE family. As to quaternary structure, probable component of the PAM complex at least composed of a mitochondrial HSP70 protein, GRPEL1 or GRPEL2, TIMM44, TIMM16/PAM16 and TIMM14/DNAJC19.

It localises to the mitochondrion matrix. Its function is as follows. Essential component of the PAM complex, a complex required for the translocation of transit peptide-containing proteins from the inner membrane into the mitochondrial matrix in an ATP-dependent manner. Seems to control the nucleotide-dependent binding of mitochondrial HSP70 to substrate proteins. Stimulates ATPase activity of mt-HSP70. May also serve to modulate the interconversion of oligomeric (inactive) and monomeric (active) forms of mt-HSP70. This Bos taurus (Bovine) protein is GrpE protein homolog 2, mitochondrial (GRPEL2).